Here is a 500-residue protein sequence, read N- to C-terminus: AMP phosphorylase (500 aa).

Residues Gly166, 192-197, and Thr201 each bind AMP; that span reads SRAVTS. Asp254 serves as the catalytic Proton donor. 2 residues coordinate AMP: Ser262 and Lys286.

Belongs to the thymidine/pyrimidine-nucleoside phosphorylase family. Type 2 subfamily.

It carries out the reaction AMP + phosphate = alpha-D-ribose 1,5-bisphosphate + adenine. The catalysed reaction is CMP + phosphate = cytosine + alpha-D-ribose 1,5-bisphosphate. The enzyme catalyses UMP + phosphate = alpha-D-ribose 1,5-bisphosphate + uracil. Functionally, catalyzes the conversion of AMP and phosphate to adenine and ribose 1,5-bisphosphate (R15P). Exhibits phosphorylase activity toward CMP and UMP in addition to AMP. Functions in an archaeal AMP degradation pathway, together with R15P isomerase and RubisCO. The chain is AMP phosphorylase (deoA) from Natronomonas pharaonis (strain ATCC 35678 / DSM 2160 / CIP 103997 / JCM 8858 / NBRC 14720 / NCIMB 2260 / Gabara) (Halobacterium pharaonis).